The primary structure comprises 504 residues: Glycerol kinase (504 aa).

An ADP-binding site is contributed by Thr-12. Residues Thr-12, Thr-13, and Ser-14 each contribute to the ATP site. Thr-12 serves as a coordination point for sn-glycerol 3-phosphate. Arg-16 contributes to the ADP binding site. Residues Arg-82, Glu-83, Tyr-134, and Asp-246 each contribute to the sn-glycerol 3-phosphate site. Glycerol is bound by residues Arg-82, Glu-83, Tyr-134, Asp-246, and Gln-247. ADP-binding residues include Thr-268 and Gly-312. Thr-268, Gly-312, Gln-316, and Gly-413 together coordinate ATP. Gly-413 and Asn-417 together coordinate ADP.

The protein belongs to the FGGY kinase family.

The catalysed reaction is glycerol + ATP = sn-glycerol 3-phosphate + ADP + H(+). Its pathway is polyol metabolism; glycerol degradation via glycerol kinase pathway; sn-glycerol 3-phosphate from glycerol: step 1/1. Its activity is regulated as follows. Inhibited by fructose 1,6-bisphosphate (FBP). Key enzyme in the regulation of glycerol uptake and metabolism. Catalyzes the phosphorylation of glycerol to yield sn-glycerol 3-phosphate. The polypeptide is Glycerol kinase (Paenarthrobacter aurescens (strain TC1)).